The sequence spans 315 residues: Neuroguidin (315 aa).

A2 bears the N-acetylalanine mark. The stretch at 5–42 (EVLESDLPNAVALLKNLQEQVMAVTAQVQTLTKKVQAK) forms a coiled coil. Positions 41–174 (AKAYPTEKGL…KGTAKKYVPP (134 aa)) are necessary for interaction with EIF4E. Phosphoserine occurs at positions 121, 142, and 143. Residues 123–174 (SENDPLRFKPHPSNMMSKLSSEDEEEDEAEEGQSGASGKKSGKGTAKKYVPP) are disordered. Over residues 144–153 (EDEEEDEAEE) the composition is skewed to acidic residues. The stretch at 181–205 (YDETEAEREKKRLERAKRRALSSSV) forms a coiled coil. S204 and S214 each carry phosphoserine. Residues 252-315 (SKREKGRRKR…RKKKGFRRRR (64 aa)) are disordered. Over residues 264-276 (VMSSQLHSLTHFS) the composition is skewed to polar residues. The span at 295 to 315 (TKKRKKIPKKGRKKKGFRRRR) shows a compositional bias: basic residues.

This sequence belongs to the SAS10 family. In terms of assembly, part of the small subunit (SSU) processome, composed of more than 70 proteins and the RNA chaperone small nucleolar RNA (snoRNA) U3. Interacts with CPEB1 and EIF4E.

Its subcellular location is the nucleus. It localises to the nucleolus. The protein localises to the chromosome. The protein resides in the centromere. It is found in the cytoplasm. Its subcellular location is the cell projection. It localises to the axon. The protein localises to the dendrite. The protein resides in the filopodium. Functionally, part of the small subunit (SSU) processome, first precursor of the small eukaryotic ribosomal subunit. During the assembly of the SSU processome in the nucleolus, many ribosome biogenesis factors, an RNA chaperone and ribosomal proteins associate with the nascent pre-rRNA and work in concert to generate RNA folding, modifications, rearrangements and cleavage as well as targeted degradation of pre-ribosomal RNA by the RNA exosome. Its dissociation from the complex determines the transition from state pre-A1 to state pre-A1*. Inhibits mRNA translation in a cytoplasmic polyadenylation element (CPE)-dependent manner. The protein is Neuroguidin (NGDN) of Bos taurus (Bovine).